We begin with the raw amino-acid sequence, 365 residues long: Heterogeneous nuclear ribonucleoproteins A1 homolog (365 aa).

The tract at residues 4 to 94 (SEAPNEPEQL…EPKRAVSRED (91 aa)) is globular A domain. 2 RRM domains span residues 14–97 (RKLF…DSSR) and 105–184 (KKIF…LSKQ). The segment at 95–185 (SSRPGAHLTV…QVRKALSKQE (91 aa)) is globular B domain. Disordered stretches follow at residues 175-208 (SQVR…RGGF) and 328-365 (GPMK…GRRF). 2 stretches are compositionally biased toward gly residues: residues 198–208 (GSGNYGSRGGF) and 330–365 (MKGG…GRRF). A nuclear targeting sequence region spans residues 321-359 (SQSSSNFGPMKGGNYGGGRNSGPYGGGYGGGSASSSSGY).

The protein resides in the nucleus. It is found in the cytoplasm. This protein is a component of ribonucleosomes. This chain is Heterogeneous nuclear ribonucleoproteins A1 homolog (hnrnpa1), found in Xenopus laevis (African clawed frog).